The following is a 558-amino-acid chain: Vanin-like protein 1 (558 aa).

The N-terminal stretch at 1–22 is a signal peptide; that stretch reads MSNTWWWLSVVLLILGLMPGMS. Residues 33–299 enclose the CN hydrolase domain; the sequence is YTAGVVEFKQ…RAIYVAQVPK (267 aa). Residue asparagine 65 is glycosylated (N-linked (GlcNAc...) asparagine). Glutamate 76 (proton acceptor) is an active-site residue. N-linked (GlcNAc...) asparagine glycosylation is found at asparagine 103, asparagine 120, and asparagine 128. Lysine 171 functions as the Proton donor in the catalytic mechanism. An N-linked (GlcNAc...) asparagine glycan is attached at asparagine 180. Cysteine 203 (nucleophile) is an active-site residue. Asparagine 354 and asparagine 379 each carry an N-linked (GlcNAc...) asparagine glycan. A lipid anchor (GPI-anchor amidated serine) is attached at serine 531. A propeptide spans 532 to 558 (removed in mature form); the sequence is GSPGLRILGGWLAMPLIILAIARTMSS.

The protein belongs to the carbon-nitrogen hydrolase superfamily. BTD/VNN family. In terms of tissue distribution, expressed in larvae and early pupae. Expressed in third instar larvae.

Its subcellular location is the cell membrane. This Drosophila melanogaster (Fruit fly) protein is Vanin-like protein 1.